The sequence spans 666 residues: Enzymatic polyprotein (666 aa).

Asp-54 is a catalytic residue. The region spanning 215–445 is the Reverse transcriptase domain; it reads ENPIDPIKSK…EKINFLGLEI (231 aa).

Belongs to the caulimoviridae enzymatic polyprotein family.

It carries out the reaction DNA(n) + a 2'-deoxyribonucleoside 5'-triphosphate = DNA(n+1) + diphosphate. Functionally, encodes for at least two polypeptides: protease (PR) and reverse transcriptase (RT). The protease processes the polyprotein in cis. Reverse transcriptase is multifunctional enzyme that converts the viral RNA genome into dsDNA in viral cytoplasmic capsids. This enzyme displays a DNA polymerase activity that can copy either DNA or RNA templates, and a ribonuclease H (RNase H) activity that cleaves the RNA strand of RNA-DNA heteroduplexes in a partially processive 3'- to 5'-endonucleasic mode. Neo-synthesized pregenomic RNA (pgRNA) are encapsidated, and reverse-transcribed inside the nucleocapsid. Partial (+)DNA is synthesized from the (-)DNA template and generates the relaxed circular DNA (RC-DNA) genome. After budding and infection, the RC-DNA migrates in the nucleus, and is converted into a plasmid-like covalently closed circular DNA (cccDNA). This Figwort mosaic virus (strain DxS) (FMV) protein is Enzymatic polyprotein.